The primary structure comprises 372 residues: 4-hydroxy-3-methylbut-2-en-1-yl diphosphate synthase (flavodoxin) (372 aa).

[4Fe-4S] cluster-binding residues include cysteine 270, cysteine 273, cysteine 305, and glutamate 312.

It belongs to the IspG family. It depends on [4Fe-4S] cluster as a cofactor.

The catalysed reaction is (2E)-4-hydroxy-3-methylbut-2-enyl diphosphate + oxidized [flavodoxin] + H2O + 2 H(+) = 2-C-methyl-D-erythritol 2,4-cyclic diphosphate + reduced [flavodoxin]. Its pathway is isoprenoid biosynthesis; isopentenyl diphosphate biosynthesis via DXP pathway; isopentenyl diphosphate from 1-deoxy-D-xylulose 5-phosphate: step 5/6. In terms of biological role, converts 2C-methyl-D-erythritol 2,4-cyclodiphosphate (ME-2,4cPP) into 1-hydroxy-2-methyl-2-(E)-butenyl 4-diphosphate. This is 4-hydroxy-3-methylbut-2-en-1-yl diphosphate synthase (flavodoxin) from Salmonella typhi.